Here is a 104-residue protein sequence, read N- to C-terminus: Gastrin (104 aa).

The first 21 residues, 1–21 (MQRLCAHALILVLALAAFCEA), serve as a signal peptide directing secretion. A propeptide spanning residues 22-58 (SWKPHSQLQDAPVAPGANKGQEPLRMDRLGPASHPRR) is cleaved from the precursor. Residues 26-70 (HSQLQDAPVAPGANKGQEPLRMDRLGPASHPRRQLGLQDPPHMVA) are disordered. Residue Tyr87 is modified to Sulfotyrosine. At Phe92 the chain carries Phenylalanine amide. Ser96 carries the phosphoserine modification. Positions 96-104 (SAEEGDQHP) are excised as a propeptide.

This sequence belongs to the gastrin/cholecystokinin family. Sulfation enhances proteolytic processing, and blocks peptide degradation. Levels of sulfation differ between proteolytically-cleaved gastrins and between tissues.

The protein localises to the secreted. Gastrin stimulates the stomach mucosa to produce and secrete hydrochloric acid and the pancreas to secrete its digestive enzymes. It also stimulates smooth muscle contraction and increases blood circulation and water secretion in the stomach and intestine. In Ovis aries (Sheep), this protein is Gastrin (GAST).